Consider the following 429-residue polypeptide: GDP-fucose protein O-fucosyltransferase 2 (429 aa).

The N-terminal stretch at 1 to 21 (MATLSFVFLLLGAVSWPPASA) is a signal peptide. 53 to 57 (PEGFN) is a binding site for GDP-beta-L-fucose. The active-site Proton acceptor is the glutamate 54. A disulfide bridge links cysteine 161 with cysteine 192. Asparagine 189, asparagine 209, and asparagine 259 each carry an N-linked (GlcNAc...) asparagine glycan. GDP-beta-L-fucose contacts are provided by residues 292 to 294 (HLR), aspartate 371, and 388 to 389 (TF). The cysteines at positions 412 and 419 are disulfide-linked.

This sequence belongs to the glycosyltransferase 68 family. As to expression, isoform A is expressed in fetal liver and peripheral blood lymphocytes. Isoform B is expressed in spleen, lung, testis, bone marrow, thymus, pancreas, prostate, fetal brain, fetal liver and fetal kidney. Isoform C is expressed in brain, heart, spleen, liver, lung, stomach, testis, placenta, skin, thymus, pancreas, mammary gland, prostate, fetal brain, fetal liver and fetal heart.

The protein localises to the endoplasmic reticulum. The protein resides in the golgi apparatus. The catalysed reaction is L-seryl-[protein] + GDP-beta-L-fucose = 3-O-(alpha-L-fucosyl)-L-seryl-[protein] + GDP + H(+). The enzyme catalyses L-threonyl-[protein] + GDP-beta-L-fucose = 3-O-(alpha-L-fucosyl)-L-threonyl-[protein] + GDP + H(+). Its pathway is protein modification; protein glycosylation. Inhibited by EDTA and by Zn(2+). Catalyzes the reaction that attaches fucose through an O-glycosidic linkage to a conserved serine or threonine residue in the consensus sequence C1-X-X-S/T-C2 of thrombospondin type I repeats (TSRs) where C1 and C2 are the first and second cysteines of the repeat, respectively. O-fucosylates members of several protein families including the ADAMTS, the thrombospondin (TSP) and spondin families. Required for the proper secretion of ADAMTS family members such as ADAMTSL1 and ADAMTS13. The O-fucosylation of TSRs is also required for restricting epithelial to mesenchymal transition (EMT), maintaining the correct patterning of mesoderm and localization of the definite endoderm. The polypeptide is GDP-fucose protein O-fucosyltransferase 2 (POFUT2) (Homo sapiens (Human)).